Consider the following 149-residue polypeptide: Mediator of RNA polymerase II transcription subunit 9 (149 aa).

The tract at residues 18–64 (TNPTLDKPNAEATKEEFSSAENRDEKDYLTNQQPKNLSTPSTSSNGE) is disordered. The segment covering 25–45 (PNAEATKEEFSSAENRDEKDY) has biased composition (basic and acidic residues). The segment covering 46–63 (LTNQQPKNLSTPSTSSNG) has biased composition (polar residues). 2 short sequence motifs (nuclear localization signal) span residues 77-99 (RKDPNNLSNQLETLTGSIRHRLK) and 136-149 (KRDVLDDLYRKLQR).

It belongs to the Mediator complex subunit 9 family. As to quaternary structure, component of the Mediator complex, which is composed of at least 21 subunits that form three structurally distinct submodules. The Mediator head module contains MED6, MED8, MED11, SRB4/MED17, SRB5/MED18, ROX3/MED19, SRB2/MED20 and SRB6/MED22, the middle module contains MED1, MED4, NUT1/MED5, MED7, CSE2/MED9, NUT2/MED10, SRB7/MED21 and SOH1/MED31, and the tail module contains MED2, PGD1/MED3, RGR1/MED14, GAL11/MED15 and SIN4/MED16. The head and the middle modules interact directly with RNA polymerase II, whereas the elongated tail module interacts with gene-specific regulatory proteins. CSE2/MED9 interacts directly with MED4.

The protein localises to the nucleus. Its function is as follows. Component of the Mediator complex, a coactivator involved in the regulated transcription of nearly all RNA polymerase II-dependent genes. Mediator functions as a bridge to convey information from gene-specific regulatory proteins to the basal RNA polymerase II transcription machinery. The Mediator complex, having a compact conformation in its free form, is recruited to promoters by direct interactions with regulatory proteins and serves for the assembly of a functional preinitiation complex with RNA polymerase II and the general transcription factors. The Mediator complex unfolds to an extended conformation and partially surrounds RNA polymerase II, specifically interacting with the unphosphorylated form of the C-terminal domain (CTD) of RNA polymerase II. The Mediator complex dissociates from the RNA polymerase II holoenzyme and stays at the promoter when transcriptional elongation begins. This Saccharomyces cerevisiae (strain ATCC 204508 / S288c) (Baker's yeast) protein is Mediator of RNA polymerase II transcription subunit 9 (CSE2).